We begin with the raw amino-acid sequence, 318 residues long: L-carnitine dehydrogenase (318 aa).

14 to 19 (GSGVIG) provides a ligand contact to NAD(+).

This sequence belongs to the 3-hydroxyacyl-CoA dehydrogenase family. L-carnitine dehydrogenase subfamily. In terms of assembly, homodimer.

The protein resides in the cytoplasm. The enzyme catalyses carnitine + NAD(+) = 3-dehydrocarnitine + NADH + H(+). The protein operates within amine and polyamine metabolism; carnitine metabolism. Catalyzes the NAD(+)-dependent oxidation of L-carnitine to 3-dehydrocarnitine. This is L-carnitine dehydrogenase from Pseudomonas syringae pv. syringae (strain B728a).